Here is a 429-residue protein sequence, read N- to C-terminus: Glutamate-1-semialdehyde 2,1-aminomutase (429 aa).

Position 267 is an N6-(pyridoxal phosphate)lysine (Lys-267).

It belongs to the class-III pyridoxal-phosphate-dependent aminotransferase family. HemL subfamily. In terms of assembly, homodimer. Pyridoxal 5'-phosphate serves as cofactor.

The protein localises to the cytoplasm. The enzyme catalyses (S)-4-amino-5-oxopentanoate = 5-aminolevulinate. Its pathway is porphyrin-containing compound metabolism; protoporphyrin-IX biosynthesis; 5-aminolevulinate from L-glutamyl-tRNA(Glu): step 2/2. This chain is Glutamate-1-semialdehyde 2,1-aminomutase, found in Xanthomonas oryzae pv. oryzae (strain PXO99A).